Here is a 125-residue protein sequence, read N- to C-terminus: Glycine cleavage system H protein (125 aa).

One can recognise a Lipoyl-binding domain in the interval 22-104 (SYIIGITDFA…YDTGWILKLT (83 aa)). Lys63 carries the post-translational modification N6-lipoyllysine.

The protein belongs to the GcvH family. The glycine cleavage system is composed of four proteins: P, T, L and H. It depends on (R)-lipoate as a cofactor.

Its function is as follows. The glycine cleavage system catalyzes the degradation of glycine. The H protein shuttles the methylamine group of glycine from the P protein to the T protein. Functionally, is also involved in protein lipoylation via its role as an octanoyl/lipoyl carrier protein intermediate. The polypeptide is Glycine cleavage system H protein (Listeria welshimeri serovar 6b (strain ATCC 35897 / DSM 20650 / CCUG 15529 / CIP 8149 / NCTC 11857 / SLCC 5334 / V8)).